Here is a 658-residue protein sequence, read N- to C-terminus: Biosynthetic arginine decarboxylase (658 aa).

An N6-(pyridoxal phosphate)lysine modification is found at Lys-127. 307-317 contacts substrate; it reads FDVGGGLGVDY.

The protein belongs to the Orn/Lys/Arg decarboxylase class-II family. SpeA subfamily. In terms of assembly, homotetramer. Pyridoxal 5'-phosphate serves as cofactor. It depends on Mg(2+) as a cofactor. In terms of processing, processed post-translationally to a 70 kDa mature form. Post-translationally, the N-terminus is blocked.

Its subcellular location is the periplasm. It carries out the reaction L-arginine + H(+) = agmatine + CO2. The protein operates within amine and polyamine biosynthesis; agmatine biosynthesis; agmatine from L-arginine: step 1/1. Its activity is regulated as follows. Down-regulated by polyamine end products putrescine and spermidine. Catalyzes the biosynthesis of agmatine from arginine. This is Biosynthetic arginine decarboxylase (speA) from Escherichia coli (strain K12).